Reading from the N-terminus, the 333-residue chain is Large ribosomal subunit protein uL3 (333 aa).

Composition is skewed to basic residues over residues 1 to 10 and 17 to 26; these read MGMKRNRPRR and PRKRAKRPVP. The tract at residues 1-29 is disordered; it reads MGMKRNRPRRGSLAFSPRKRAKRPVPKIR.

It belongs to the universal ribosomal protein uL3 family. Part of the 50S ribosomal subunit. Forms a cluster with proteins L14 and L24e.

In terms of biological role, one of the primary rRNA binding proteins, it binds directly near the 3'-end of the 23S rRNA, where it nucleates assembly of the 50S subunit. This Methanococcus aeolicus (strain ATCC BAA-1280 / DSM 17508 / OCM 812 / Nankai-3) protein is Large ribosomal subunit protein uL3.